Reading from the N-terminus, the 348-residue chain is Dihydroorotase (348 aa).

Zn(2+) is bound by residues histidine 14 and histidine 16. Residues 16–18 (HLR) and asparagine 42 each bind substrate. Zn(2+) contacts are provided by lysine 100, histidine 137, and histidine 175. Lysine 100 bears the N6-carboxylysine mark. Histidine 137 provides a ligand contact to substrate. Leucine 220 is a substrate binding site. Zn(2+) is bound at residue aspartate 248. Aspartate 248 is a catalytic residue. Substrate-binding residues include histidine 252 and alanine 264.

It belongs to the metallo-dependent hydrolases superfamily. DHOase family. Class II DHOase subfamily. Homodimer. Zn(2+) serves as cofactor.

The catalysed reaction is (S)-dihydroorotate + H2O = N-carbamoyl-L-aspartate + H(+). It functions in the pathway pyrimidine metabolism; UMP biosynthesis via de novo pathway; (S)-dihydroorotate from bicarbonate: step 3/3. In terms of biological role, catalyzes the reversible cyclization of carbamoyl aspartate to dihydroorotate. This Pseudomonas fluorescens (strain SBW25) protein is Dihydroorotase.